A 134-amino-acid chain; its full sequence is Cytochrome c-type biogenesis protein CcmE (134 aa).

The Cytoplasmic portion of the chain corresponds to 1–7; that stretch reads MKRKYRR. Residues 8 to 28 form a helical; Signal-anchor for type II membrane protein membrane-spanning segment; the sequence is LFVVIITLSIFAGSVVFVLGK. Residues 29–134 are Periplasmic-facing; it reads LKNNVSFFYT…MPNKYKTNNL (106 aa). Positions 120 and 124 each coordinate heme.

The protein belongs to the CcmE/CycJ family.

Its subcellular location is the cell inner membrane. Functionally, heme chaperone required for the biogenesis of c-type cytochromes. Transiently binds heme delivered by CcmC and transfers the heme to apo-cytochromes in a process facilitated by CcmF and CcmH. In Ehrlichia ruminantium (strain Gardel), this protein is Cytochrome c-type biogenesis protein CcmE.